Here is a 602-residue protein sequence, read N- to C-terminus: Elongation factor 4 (602 aa).

The tr-type G domain occupies 7 to 189 (KYIRNFSIVA…AIVSKVPAPY (183 aa)). GTP contacts are provided by residues 19 to 24 (DHGKST) and 136 to 139 (NKID).

It belongs to the TRAFAC class translation factor GTPase superfamily. Classic translation factor GTPase family. LepA subfamily.

It localises to the cell membrane. The enzyme catalyses GTP + H2O = GDP + phosphate + H(+). Required for accurate and efficient protein synthesis under certain stress conditions. May act as a fidelity factor of the translation reaction, by catalyzing a one-codon backward translocation of tRNAs on improperly translocated ribosomes. Back-translocation proceeds from a post-translocation (POST) complex to a pre-translocation (PRE) complex, thus giving elongation factor G a second chance to translocate the tRNAs correctly. Binds to ribosomes in a GTP-dependent manner. The chain is Elongation factor 4 from Clostridium botulinum (strain Loch Maree / Type A3).